The primary structure comprises 309 residues: Ribonuclease Z (309 aa).

7 residues coordinate Zn(2+): histidine 63, histidine 65, aspartate 67, histidine 68, histidine 145, aspartate 216, and histidine 274. The active-site Proton acceptor is aspartate 67.

The protein belongs to the RNase Z family. In terms of assembly, homodimer. Zn(2+) serves as cofactor.

It carries out the reaction Endonucleolytic cleavage of RNA, removing extra 3' nucleotides from tRNA precursor, generating 3' termini of tRNAs. A 3'-hydroxy group is left at the tRNA terminus and a 5'-phosphoryl group is left at the trailer molecule.. Zinc phosphodiesterase, which displays some tRNA 3'-processing endonuclease activity. Probably involved in tRNA maturation, by removing a 3'-trailer from precursor tRNA. This Streptococcus pyogenes serotype M6 (strain ATCC BAA-946 / MGAS10394) protein is Ribonuclease Z.